A 177-amino-acid chain; its full sequence is Large ribosomal subunit protein bL9 (177 aa).

Positions 151–177 (EDEEIAEAAPVAEAQAEADGHSTEETA) are disordered. Positions 157-167 (EAAPVAEAQAE) are enriched in low complexity. The span at 168–177 (ADGHSTEETA) shows a compositional bias: basic and acidic residues.

This sequence belongs to the bacterial ribosomal protein bL9 family.

In terms of biological role, binds to the 23S rRNA. This is Large ribosomal subunit protein bL9 from Solidesulfovibrio magneticus (strain ATCC 700980 / DSM 13731 / RS-1) (Desulfovibrio magneticus).